Consider the following 518-residue polypeptide: Chromosomal replication initiator protein DnaA (518 aa).

The segment at 1–76 (METDGGDFPS…RALSEAYGSP (76 aa)) is domain I, interacts with DnaA modulators. Residues 76–176 (PIRLAVTVDP…RRPTTRIENS (101 aa)) are domain II. The disordered stretch occupies residues 91–174 (LTPERTGEHS…QPRRPTTRIE (84 aa)). The segment covering 124 to 135 (DGLHLDERRSGS) has biased composition (basic and acidic residues). Residues 136-147 (LEEDSPLDDSDP) show a composition bias toward acidic residues. Residues 177 to 393 (RLNPKYIFET…GALIRVTAFA (217 aa)) are domain III, AAA+ region. Positions 221, 223, 224, and 225 each coordinate ATP. A domain IV, binds dsDNA region spans residues 394–518 (SLNRQPVDMQ…TNRIKKQSGA (125 aa)).

It belongs to the DnaA family. Oligomerizes as a right-handed, spiral filament on DNA at oriC.

The protein localises to the cytoplasm. In terms of biological role, plays an essential role in the initiation and regulation of chromosomal replication. ATP-DnaA binds to the origin of replication (oriC) to initiate formation of the DNA replication initiation complex once per cell cycle. Binds the DnaA box (a 9 base pair repeat at the origin) and separates the double-stranded (ds)DNA. Forms a right-handed helical filament on oriC DNA; dsDNA binds to the exterior of the filament while single-stranded (ss)DNA is stabiized in the filament's interior. The ATP-DnaA-oriC complex binds and stabilizes one strand of the AT-rich DNA unwinding element (DUE), permitting loading of DNA polymerase. After initiation quickly degrades to an ADP-DnaA complex that is not apt for DNA replication. Binds acidic phospholipids. In Kineococcus radiotolerans (strain ATCC BAA-149 / DSM 14245 / SRS30216), this protein is Chromosomal replication initiator protein DnaA.